Here is a 265-residue protein sequence, read N- to C-terminus: Adenosylcobinamide-GDP ribazoletransferase (265 aa).

5 consecutive transmembrane segments (helical) span residues 59–79, 113–133, 141–161, 183–203, and 206–226; these read LSWI…SVLI, IGTF…LLLV, WIFL…ALLL, LPPF…VYFL, and FQNQ…FVFY.

The protein belongs to the CobS family. The cofactor is Mg(2+).

It is found in the cell inner membrane. The catalysed reaction is alpha-ribazole + adenosylcob(III)inamide-GDP = adenosylcob(III)alamin + GMP + H(+). The enzyme catalyses alpha-ribazole 5'-phosphate + adenosylcob(III)inamide-GDP = adenosylcob(III)alamin 5'-phosphate + GMP + H(+). The protein operates within cofactor biosynthesis; adenosylcobalamin biosynthesis; adenosylcobalamin from cob(II)yrinate a,c-diamide: step 7/7. Its function is as follows. Joins adenosylcobinamide-GDP and alpha-ribazole to generate adenosylcobalamin (Ado-cobalamin). Also synthesizes adenosylcobalamin 5'-phosphate from adenosylcobinamide-GDP and alpha-ribazole 5'-phosphate. This Leptospira interrogans serogroup Icterohaemorrhagiae serovar copenhageni (strain Fiocruz L1-130) protein is Adenosylcobinamide-GDP ribazoletransferase.